Here is a 371-residue protein sequence, read N- to C-terminus: tRNA-specific 2-thiouridylase MnmA (371 aa).

Residues 13 to 20 (GMSGGVDS) and methionine 39 contribute to the ATP site. Positions 99-101 (NPD) are interaction with target base in tRNA. Cysteine 104 acts as the Nucleophile in catalysis. Cysteines 104 and 200 form a disulfide. ATP is bound at residue glycine 128. The segment at 150–152 (KDQ) is interaction with tRNA. Cysteine 200 acts as the Cysteine persulfide intermediate in catalysis. Residues 309-310 (RY) are interaction with tRNA.

This sequence belongs to the MnmA/TRMU family.

It localises to the cytoplasm. The enzyme catalyses S-sulfanyl-L-cysteinyl-[protein] + uridine(34) in tRNA + AH2 + ATP = 2-thiouridine(34) in tRNA + L-cysteinyl-[protein] + A + AMP + diphosphate + H(+). Functionally, catalyzes the 2-thiolation of uridine at the wobble position (U34) of tRNA, leading to the formation of s(2)U34. The sequence is that of tRNA-specific 2-thiouridylase MnmA from Bacillus subtilis (strain 168).